An 89-amino-acid chain; its full sequence is Cell division topological specificity factor (89 aa).

The protein belongs to the MinE family.

Prevents the cell division inhibition by proteins MinC and MinD at internal division sites while permitting inhibition at polar sites. This ensures cell division at the proper site by restricting the formation of a division septum at the midpoint of the long axis of the cell. The sequence is that of Cell division topological specificity factor from Sodalis glossinidius (strain morsitans).